The following is a 913-amino-acid chain: MSEVGIQNHKKAVTKPRRREKVIELIEVDGKKVSTTSTGKRKFHNKSKNGCDNCKRRRVKCDEGKPACRKCTNMKLECQYTPIHLRKGRGATVVKYVTRKADGSVESDSSVDLPPTIKKEQTPFNDIQSAVKASGSSNDSFPSSASTTKSESEEKSSAPIEDKNNMTPLSMGLQGTINKKDMMNNFFSQNGTIGFGSPERLNSGIDGLLLPPLPSGNMGAFQLQQQQQVQQQSQPQTQAQQASGTPNERYGSFDLAGSPALQSTGMSLSNSLSGMLLCNRIPSGQNYTQQQLQYQLHQQLQLQQHQQVQLQQYQQLRQEQHQQVQQQQQEQLQQYQQHFLQQQQQVLLQQEQQPNDEEGGVQEENSKKVKEGPLQSQTSETTLNSDAATLQADALSQLSKMGLSLKSLSTFPTAGIGGVSYDFQELLGIKFPINNGNSRATKASNAEEALANMQEHHERAAASVKENDGQLSDTKSPAPSNNAQGGSASIMEPQAADAVSTMAPISMIERNMNRNSNISPSTPSAVLNDRQEMQDSISSLGNLTKAALENNEPTISLQTSQTENEDDASRQDMTSKINNEADRSSVSAGTSNIAKLLDLSTKGNLNLIDMKLFHHYCTKVWPTITAAKVSGPEIWRDYIPELAFDYPFLMHALLAFSATHLSRTETGLEQYVSSHRLDALRLLREAVLEISENNTDALVASALILIMDSLANASGNGTVGNQSLNSMSPSAWIFHVKGAATILTAVWPLSERSKFHNIISVDLSDLGDVINPDVGTITELVCFDESIADLYPVGLDSPYLITLAYLDKLHREKNQGDFILRVFTFPALLDKTFLALLMTGDLGAMRIMRSYYKLLRGFATEVKDKVWFLEGVTQVLPQDVDEYSGGGGMHMMLDFLGGGLPSMTTTNFSDFSL.

A DNA-binding region (zn(2)-C6 fungal-type) is located at residues 50–80 (GCDNCKRRRVKCDEGKPACRKCTNMKLECQY). 2 disordered regions span residues 103–173 (GSVE…SMGL) and 216–258 (GNMG…LAGS). A Phosphothreonine modification is found at threonine 122. A compositionally biased stretch (basic and acidic residues) spans 150–164 (SESEEKSSAPIEDKN). The span at 222 to 241 (QLQQQQQVQQQSQPQTQAQQ) shows a compositional bias: low complexity. The stretch at 303–346 (QQHQQVQLQQYQQLRQEQHQQVQQQQQEQLQQYQQHFLQQQQQV) forms a coiled coil. 2 disordered regions span residues 347–385 (LLQQEQQPNDEEGGVQEENSKKVKEGPLQSQTSETTLNS) and 453–489 (MQEHHERAAASVKENDGQLSDTKSPAPSNNAQGGSAS). Polar residues predominate over residues 374 to 385 (LQSQTSETTLNS). Positions 440 to 472 (ATKASNAEEALANMQEHHERAAASVKENDGQLS) form a coiled coil. Over residues 454–468 (QEHHERAAASVKEND) the composition is skewed to basic and acidic residues. Polar residues predominate over residues 469–487 (GQLSDTKSPAPSNNAQGGS). A Phosphoserine modification is found at serine 519. Positions 552 to 562 (EPTISLQTSQT) are enriched in polar residues. Positions 552-571 (EPTISLQTSQTENEDDASRQ) are disordered.

It localises to the nucleus. In terms of biological role, transcription factor that is involved in activation of anaerobic genes such as DAN/TIR cell wall mannoprotein genes and YML083c. Appears to bind to anaerobic response elements (AR1) with the consensus sequence 5'-TCGTTYAG-3' present in the promoter regions of DAN/TIR genes. Involved in sterol uptake and regulation of the sterol biosynthesis. Binds to sterol regulatory elements (SRE) with the consensus sequence 5'-TCGTATA-3' present in ERG2 and ERG3 promoters. May be involved in down-regulation of CWP2 during anaerobic adaptation. This is Sterol uptake control protein 2 (UPC2) from Saccharomyces cerevisiae (strain ATCC 204508 / S288c) (Baker's yeast).